Consider the following 549-residue polypeptide: MSSAAPAKKPYRKAPPEHRELRLEIPVSRLEQEESLTDAERMKLLQQENEELRKRLASATRRTEALERELEIGQDCLELELGQSREELDKFKDKFRRLQNSYTASQRTNQELEDKLHALASLSHSWIFAIKKAEMDRKTLDWEIVELTNKLLDARNTINKLEELNERYRLDCNLAVQLLKCNKSHFRNHKLADLPCELQDMVRKHLRSGQEVASPSPSPSSSLSPGAVVPTSVIARVLEKPESLLLNSAQSGSAGRPLAEDVFVHVDMSGGDPASPPAPGSPNGECCSVSTAGGSPEEELPLPAFDKLSPYPTPSPPHPLYPGRKVIEFSEDKIRIPRNSPLPNCTYATRQAISLSLVEDGSERAHRSSVPSSPASAQGSPHHQPSPAPSALSAPASSASSEEDLLASWQRAFVDRTPPPAAVVQRTAFGRDSLPELQLHFSPGHSTAPPPSPHRERGLVLPAEPDSGFPQDEEEEMLNLPVSPEEERQSLLPDKEGTEEASGPSHVDGRAWPLPSPSRPQRSPKRMGVHHLHRKDSLTQAQEQGTVLS.

Residues 1 to 34 (MSSAAPAKKPYRKAPPEHRELRLEIPVSRLEQEE) form a disordered region. Basic and acidic residues predominate over residues 14–23 (APPEHRELRL). Positions 42–171 (MKLLQQENEE…EELNERYRLD (130 aa)) form a coiled coil. 2 disordered regions span residues 207–226 (RSGQ…LSPG) and 266–322 (VDMS…PLYP). S295 carries the phosphoserine modification. The span at 311–320 (YPTPSPPHPL) shows a compositional bias: pro residues. Position 313 is a phosphothreonine (T313). S315 and S340 each carry phosphoserine. Disordered stretches follow at residues 359–404 (EDGS…SEED), 410–429 (QRAF…RTAF), and 434–549 (LPEL…TVLS). A compositionally biased stretch (polar residues) spans 369–383 (SVPSSPASAQGSPHH). Positions 389-400 (PSALSAPASSAS) are enriched in low complexity. A Phosphothreonine modification is found at T417. S483 is subject to Phosphoserine. Basic and acidic residues predominate over residues 485 to 498 (EEERQSLLPDKEGT). Over residues 522-534 (RSPKRMGVHHLHR) the composition is skewed to basic residues. S537 carries the post-translational modification Phosphoserine. A compositionally biased stretch (polar residues) spans 538 to 549 (LTQAQEQGTVLS).

In terms of assembly, interacts with DLG1. Interacts with ARF6 (GTP-bound form). As to expression, widely expressed including in adult thymus, heart, lung, liver, small intestine, kidney, spleen, testis and skeletal muscle and in embryonic brain but not detected in adult brain (at protein level).

The protein resides in the golgi apparatus. It localises to the trans-Golgi network. The protein localises to the cell junction. It is found in the tight junction. Its subcellular location is the cell membrane. Its function is as follows. Plays a role in regulating the structure of the Golgi apparatus. In Mus musculus (Mouse), this protein is Tight junction-associated protein 1.